The chain runs to 233 residues: uncharacterized protein (233 aa).

Disordered stretches follow at residues 1–159 and 181–206; these read MGKH…NEKL and MGVK…QDKM. A compositionally biased stretch (basic and acidic residues) spans 36–115; that stretch reads RDRSRSPHKE…RRDDKNRLSA (80 aa). Over residues 135-148 the composition is skewed to low complexity; it reads SSSSNTTDTASSSS. The span at 189-206 shows a compositional bias: basic and acidic residues; that stretch reads PTDDSSRLSDEKNRQDKM.

This is an uncharacterized protein from Caenorhabditis elegans.